Consider the following 733-residue polypeptide: MPEQSSIPTIPTLSDAYTYALDAWQRSILFLDVMRQRGAQYEEHTAQTAPNVLDYEAELVCDGRKLDRPVNYALVRIVPPAGAVIDPLKKPFVVVDPRAGHGPGIGGFKADSEIGVAIKAGHACYFIGFLPEPVPGQTIEDITRSEAIFLETVIARHPDADGKPCVIGNCQAGWAVMILASLRPELFGPIIIAGAPLSYWAGIRGQYPMRYSGGLLGGSWLTALTGDLGAGIFDGAWLVQNFENQNPANTLWTKQYNLYSKVDTEAGRYLGFERWWGGHVRLNAEEMQFIVDELFVGNKLAAGKIQTSDGTTIDMRNIRSPIVVFCSKGDNITPPAQALDWILDLHDSVDEIRAHGQTIVYTVHEKIGHLGIFVSAGVARKEHDEFASNIDLIDVLPPGLYEAVLEPVGPAVENPDLVSGEWIMRCEARTLDDIRAFGGNDLEDDRRFAAAARVSEINLALYRTYLQPWIKGMVTPPMAEAMRSMHPLRLQYEVFGPGNPVMAWVEAAAGLIRDARQPVAPDNPLLALQENMSRQVVDGLEAWRQMVEHLSEQKFREIYGAPALQAALGIDTQTDRPPRQAAKNCWHHALLENKIAALKADMAKGGIREALARALLFVGMARGRVDERGFEAVRRLRRAHPSAKQLTLAEFKALMRTQYFMLLVDEEAALAAIPKLLPEKIEERGAAFAALREVLEAPGLLTGIAAERLQSVKALFGLSGEAPVPLMVRKVAR.

Residues 174–194 (WAVMILASLRPELFGPIIIAG) traverse the membrane as a helical segment.

It is found in the membrane. This is an uncharacterized protein from Rhizobium meliloti (Ensifer meliloti).